The following is a 152-amino-acid chain: Deoxyuridine 5'-triphosphate nucleotidohydrolase (152 aa).

Substrate is bound by residues 71–73, asparagine 84, 88–90, and methionine 98; these read RSG and LID.

This sequence belongs to the dUTPase family. It depends on Mg(2+) as a cofactor.

It carries out the reaction dUTP + H2O = dUMP + diphosphate + H(+). Its pathway is pyrimidine metabolism; dUMP biosynthesis; dUMP from dCTP (dUTP route): step 2/2. Functionally, this enzyme is involved in nucleotide metabolism: it produces dUMP, the immediate precursor of thymidine nucleotides and it decreases the intracellular concentration of dUTP so that uracil cannot be incorporated into DNA. This is Deoxyuridine 5'-triphosphate nucleotidohydrolase from Hahella chejuensis (strain KCTC 2396).